A 148-amino-acid chain; its full sequence is 3-dehydroquinate dehydratase (148 aa).

Residue tyrosine 26 is the Proton acceptor of the active site. Positions 77, 83, and 90 each coordinate substrate. The active-site Proton donor is histidine 103. Substrate-binding positions include 104 to 105 and arginine 114; that span reads LS.

The protein belongs to the type-II 3-dehydroquinase family. As to quaternary structure, homododecamer.

It carries out the reaction 3-dehydroquinate = 3-dehydroshikimate + H2O. Its pathway is metabolic intermediate biosynthesis; chorismate biosynthesis; chorismate from D-erythrose 4-phosphate and phosphoenolpyruvate: step 3/7. Its function is as follows. Catalyzes a trans-dehydration via an enolate intermediate. The chain is 3-dehydroquinate dehydratase from Chlorobaculum tepidum (strain ATCC 49652 / DSM 12025 / NBRC 103806 / TLS) (Chlorobium tepidum).